The primary structure comprises 421 residues: RNA exonuclease 4 (421 aa).

Disordered regions lie at residues 1-51 (MAKA…ETKK) and 79-179 (ENQA…QPPK). Positions 11-24 (SPCSGSLGKTANTP) are enriched in polar residues. Residues 25–36 (KQKRKQKQRKFW) are compositionally biased toward basic residues. 3 stretches are compositionally biased toward basic and acidic residues: residues 92 to 107 (PKKD…EESV), 140 to 149 (AAEKSDEVSK), and 161 to 170 (DTEHQGKKPQ). The Exonuclease domain occupies 234–385 (TVAMDCEMVG…QDAQAAMRLY (152 aa)).

Belongs to the REXO4 family.

It is found in the nucleus. The polypeptide is RNA exonuclease 4 (rexo4) (Xenopus laevis (African clawed frog)).